Here is a 149-residue protein sequence, read N- to C-terminus: Large ribosomal subunit protein uL13 (149 aa).

This sequence belongs to the universal ribosomal protein uL13 family. Part of the 50S ribosomal subunit.

In terms of biological role, this protein is one of the early assembly proteins of the 50S ribosomal subunit, although it is not seen to bind rRNA by itself. It is important during the early stages of 50S assembly. This Bifidobacterium longum subsp. infantis (strain ATCC 15697 / DSM 20088 / JCM 1222 / NCTC 11817 / S12) protein is Large ribosomal subunit protein uL13.